Consider the following 63-residue polypeptide: DNA gyrase inhibitor YacG (63 aa).

The Zn(2+) site is built by Cys-9, Cys-12, Cys-28, and Cys-32.

This sequence belongs to the DNA gyrase inhibitor YacG family. Interacts with GyrB. Requires Zn(2+) as cofactor.

In terms of biological role, inhibits all the catalytic activities of DNA gyrase by preventing its interaction with DNA. Acts by binding directly to the C-terminal domain of GyrB, which probably disrupts DNA binding by the gyrase. This Salmonella choleraesuis (strain SC-B67) protein is DNA gyrase inhibitor YacG.